The following is a 772-amino-acid chain: DnaJ homolog subfamily C member 16 (772 aa).

Residues 1–25 (MELKRLGVSWRFLMVLVLILQSLSA) form the signal peptide. Topologically, residues 26–533 (LDFDPYRVLG…ESLLHSNWRE (508 aa)) are cytoplasmic. Residues 29–93 (DPYRVLGVSR…EKRTNYDHYG (65 aa)) form the J domain. The Thioredoxin domain occupies 119–245 (FDESFFHFPF…LRQFVESLLP (127 aa)). The helical; Anchor for type IV membrane protein transmembrane segment at 534–554 (MMPLLSLIFSALFILFGTVMV) threads the bilayer. Residues 555-772 (QAFSDSNEER…FYIPSWPELD (218 aa)) lie on the Extracellular side of the membrane. Positions 560–591 (SNEERESHPADKEEVPEKAGKTEPSFTKESSS) are disordered. Over residues 561-580 (NEERESHPADKEEVPEKAGK) the composition is skewed to basic and acidic residues. N629 carries an N-linked (GlcNAc...) asparagine glycan.

Its subcellular location is the endoplasmic reticulum membrane. Plays an important role in regulating the size of autophagosomes during the formation process. The sequence is that of DnaJ homolog subfamily C member 16 (Dnajc16) from Mus musculus (Mouse).